The chain runs to 370 residues: D-alanine--D-alanine ligase (370 aa).

Residues 142–348 (KQILTHHHIQ…YTALIDQLIQ (207 aa)) form the ATP-grasp domain. 172–227 (QAHVGDHLFIKPANQGSSIGIHKAENEQEYLDGLADAFKYDYKILVEESIDNPREV) serves as a coordination point for ATP. 3 residues coordinate Mg(2+): D302, E315, and N317.

Belongs to the D-alanine--D-alanine ligase family. Requires Mg(2+) as cofactor. The cofactor is Mn(2+).

Its subcellular location is the cytoplasm. The catalysed reaction is 2 D-alanine + ATP = D-alanyl-D-alanine + ADP + phosphate + H(+). The protein operates within cell wall biogenesis; peptidoglycan biosynthesis. Its function is as follows. Cell wall formation. This chain is D-alanine--D-alanine ligase, found in Lactiplantibacillus plantarum (strain ATCC BAA-793 / NCIMB 8826 / WCFS1) (Lactobacillus plantarum).